Reading from the N-terminus, the 408-residue chain is Lysosomal phospholipase A and acyltransferase (408 aa).

The signal sequence occupies residues 1 to 31 (MGLRRGPCPAALLPGGFLFLLLLADPALLAG). Asp-42 is a binding site for substrate. Cys-61 and Cys-85 are oxidised to a cystine. Asn-95 is a glycosylation site (N-linked (GlcNAc...) asparagine). Ser-194 serves as the catalytic Acyl-ester intermediate. Ser-194 is a binding site for Zn(2+). Residue Met-195 coordinates substrate. 2 N-linked (GlcNAc...) asparagine glycosylation sites follow: Asn-269 and Asn-285. Zn(2+)-binding residues include Asp-336 and Cys-351. Active-site charge relay system residues include Asp-356 and His-388. His-388 provides a ligand contact to Zn(2+). Residue Asn-394 is glycosylated (N-linked (GlcNAc...) asparagine).

The protein belongs to the AB hydrolase superfamily. Lipase family. In terms of processing, N-glycosylated. N-glycosylation is important for maturation of the enzyme and normal subcellular location.

The protein resides in the secreted. Its subcellular location is the lysosome. It is found in the membrane. It catalyses the reaction a 1,2-diacyl-sn-glycero-3-phosphocholine + H2O = a 2-acyl-sn-glycero-3-phosphocholine + a fatty acid + H(+). The catalysed reaction is 1-hexadecanoyl-2-(9Z-octadecenoyl)-sn-glycero-3-phosphocholine + H2O = 2-(9Z-octadecenoyl)-sn-glycero-3-phosphocholine + hexadecanoate + H(+). The enzyme catalyses 1,2-di-(9Z-octadecenoyl)-sn-glycero-3-phosphocholine + H2O = 2-(9Z-octadecenoyl)-sn-glycero-3-phosphocholine + (9Z)-octadecenoate + H(+). It carries out the reaction 1-hexadecanoyl-2-glutaroyl-sn-glycero-3-phosphocholine + H2O = 2-glutaroyl-sn-glycero-3-phosphocholine + hexadecanoate + H(+). It catalyses the reaction 1-hexadecanoyl-2-nonadioyl-sn-glycero-3-phosphocholine + H2O = 2-nonadioyl-sn-glycero-3-phosphocholine + hexadecanoate + H(+). The catalysed reaction is 1-hexadecanoyl-2-(5-oxopentanoyl)-sn-glycero-3-phosphocholine + H2O = 2-(5-oxopentanoyl)-sn-glycero-3-phosphocholine + hexadecanoate + H(+). The enzyme catalyses 1-hexadecanoyl-2-(9-oxononanoyl)-sn-glycero-3-phosphocholine + H2O = 2-(9-oxononanoyl)-sn-glycero-3-phosphocholine + hexadecanoate + H(+). It carries out the reaction 1,2-dihexadecanoyl-sn-glycero-3-phosphocholine + H2O = 2-hexadecanoyl-sn-glycero-3-phosphocholine + hexadecanoate + H(+). It catalyses the reaction a 1,2-diacyl-sn-glycero-3-phosphocholine + H2O = a 1-acyl-sn-glycero-3-phosphocholine + a fatty acid + H(+). The catalysed reaction is 1-hexadecanoyl-2-(9Z-octadecenoyl)-sn-glycero-3-phosphocholine + H2O = 1-hexadecanoyl-sn-glycero-3-phosphocholine + (9Z)-octadecenoate + H(+). The enzyme catalyses 1,2-di-(9Z-octadecenoyl)-sn-glycero-3-phosphocholine + H2O = 1-(9Z-octadecenoyl)-sn-glycero-3-phosphocholine + (9Z)-octadecenoate + H(+). It carries out the reaction 1,2-dihexadecanoyl-sn-glycero-3-phosphocholine + H2O = 1-hexadecanoyl-sn-glycero-3-phosphocholine + hexadecanoate + H(+). It catalyses the reaction a 1-acyl-sn-glycero-3-phosphocholine + H2O = sn-glycerol 3-phosphocholine + a fatty acid + H(+). The catalysed reaction is 1-hexadecanoyl-sn-glycero-3-phosphocholine + H2O = sn-glycerol 3-phosphocholine + hexadecanoate + H(+). The enzyme catalyses N-(acetyl)-sphing-4-enine + a 1,2-diacyl-sn-glycero-3-phosphoethanolamine = 1-O-acyl-N-(acetyl)-sphing-4-enine + a 2-acyl-sn-glycero-3-phosphoethanolamine. It carries out the reaction 1-hexadecanoyl-2-(9Z-octadecenoyl)-sn-glycero-3-phosphoethanolamine + N-(acetyl)-sphing-4-enine = 2-(9Z-octadecenoyl)-sn-glycero-3-phosphoethanolamine + 1-hexadecanoyl-N-(acetyl)-sphing-4-enine. It catalyses the reaction 1-hexadecanoyl-2-(9Z,12Z-octadecadienoyl)-sn-glycero-3-phosphoethanolamine + N-(acetyl)-sphing-4-enine = 2-(9Z,12Z)-octadecadienoyl-sn-glycero-3-phosphoethanolamine + 1-hexadecanoyl-N-(acetyl)-sphing-4-enine. The catalysed reaction is 1-hexadecanoyl-2-(5Z,8Z,11Z,14Z-eicosatetraenoyl)-sn-glycero-3-phosphoethanolamine + N-(acetyl)-sphing-4-enine = 2-(5Z,8Z,11Z,14Z)-eicosatetraenoyl-sn-glycero-3-phosphoethanolamine + 1-hexadecanoyl-N-(acetyl)-sphing-4-enine. The enzyme catalyses N-(acetyl)-sphing-4-enine + a 1,2-diacyl-sn-glycero-3-phosphoethanolamine = 1-O-acyl-N-(acetyl)-sphing-4-enine + a 1-acyl-sn-glycero-3-phosphoethanolamine. It carries out the reaction 1-hexadecanoyl-2-(9Z-octadecenoyl)-sn-glycero-3-phosphoethanolamine + N-(acetyl)-sphing-4-enine = 1-(9Z-octadecenoyl)-N-(acetyl)-sphing-4-enine + 1-hexadecanoyl-sn-glycero-3-phosphoethanolamine. It catalyses the reaction 1-hexadecanoyl-2-(9Z,12Z-octadecadienoyl)-sn-glycero-3-phosphoethanolamine + N-(acetyl)-sphing-4-enine = 1-(9Z,12Z-octadecadienoyl)-N-acetylsphing-4-enine + 1-hexadecanoyl-sn-glycero-3-phosphoethanolamine. The catalysed reaction is 1-hexadecanoyl-2-(5Z,8Z,11Z,14Z-eicosatetraenoyl)-sn-glycero-3-phosphoethanolamine + N-(acetyl)-sphing-4-enine = 1-(5Z,8Z,11Z,14Z)-eicosatetraenoyl-N-(acetyl)-sphing-4-enine + 1-hexadecanoyl-sn-glycero-3-phosphoethanolamine. The enzyme catalyses N-(acetyl)-sphing-4-enine + a 1,2-diacyl-sn-glycero-3-phosphocholine = 1-O-acyl-N-(acetyl)-sphing-4-enine + a 2-acyl-sn-glycero-3-phosphocholine. It carries out the reaction 1-hexadecanoyl-2-(9Z-octadecenoyl)-sn-glycero-3-phosphocholine + N-(acetyl)-sphing-4-enine = 1-hexadecanoyl-N-(acetyl)-sphing-4-enine + 2-(9Z-octadecenoyl)-sn-glycero-3-phosphocholine. It catalyses the reaction 1-hexadecanoyl-2-(9Z,12Z-octadecadienoyl)-sn-glycero-3-phosphocholine + N-(acetyl)-sphing-4-enine = 2-(9Z,12Z-octadecadienoyl)-sn-glycero-3-phosphocholine + 1-hexadecanoyl-N-(acetyl)-sphing-4-enine. The catalysed reaction is 1-hexadecanoyl-2-(5Z,8Z,11Z,14Z-eicosatetraenoyl)-sn-glycero-3-phosphocholine + N-(acetyl)-sphing-4-enine = 1-hexadecanoyl-N-(acetyl)-sphing-4-enine + 2-(5Z,8Z,11Z,14Z)-eicosatetraenoyl-sn-glycero-3-phosphocholine. The enzyme catalyses 1-hexadecanoyl-2-(4Z,7Z,10Z,13Z,16Z,19Z-docosahexaenoyl)-sn-glycero-3-phosphocholine + N-(acetyl)-sphing-4-enine = 2-(4Z,7Z,10Z,13Z,16Z,19Z-docosahexaenoyl)-sn-glycero-3-phosphocholine + 1-hexadecanoyl-N-(acetyl)-sphing-4-enine. It carries out the reaction 1-hexadecanoyl-2-nonadioyl-sn-glycero-3-phosphocholine + N-(acetyl)-sphing-4-enine = 2-nonadioyl-sn-glycero-3-phosphocholine + 1-hexadecanoyl-N-(acetyl)-sphing-4-enine. It catalyses the reaction 1-octadecanoyl-2-(9Z-octadecenoyl)-sn-glycero-3-phosphocholine + N-(acetyl)-sphing-4-enine = 1-octadecanoyl-N-(acetyl)-sphing-4-enine + 2-(9Z-octadecenoyl)-sn-glycero-3-phosphocholine. The catalysed reaction is 1-(9Z)-octadecenoyl-2-octadecanoyl-sn-glycero-3-phosphocholine + N-(acetyl)-sphing-4-enine = 2-octadecanoyl-sn-glycero-3-phosphocholine + 1-(9Z-octadecenoyl)-N-(acetyl)-sphing-4-enine. The enzyme catalyses 1-octadecanoyl-2-(5Z,8Z,11Z,14Z-eicosatetraenoyl)-sn-glycero-3-phosphocholine + N-(acetyl)-sphing-4-enine = 1-octadecanoyl-N-(acetyl)-sphing-4-enine + 2-(5Z,8Z,11Z,14Z)-eicosatetraenoyl-sn-glycero-3-phosphocholine. It carries out the reaction 1-(9Z-octadecenoyl)-2-hexadecanoyl-sn-glycero-3-phosphocholine + N-(acetyl)-sphing-4-enine = 1-(9Z-octadecenoyl)-N-(acetyl)-sphing-4-enine + 2-hexadecanoyl-sn-glycero-3-phosphocholine. It catalyses the reaction N-(acetyl)-sphing-4-enine + a 1,2-diacyl-sn-glycero-3-phosphocholine = 1-O-acyl-N-(acetyl)-sphing-4-enine + a 1-acyl-sn-glycero-3-phosphocholine. The catalysed reaction is 1-hexadecanoyl-2-(9Z-octadecenoyl)-sn-glycero-3-phosphocholine + N-(acetyl)-sphing-4-enine = 1-(9Z-octadecenoyl)-N-(acetyl)-sphing-4-enine + 1-hexadecanoyl-sn-glycero-3-phosphocholine. The enzyme catalyses 1-hexadecanoyl-2-(9Z,12Z-octadecadienoyl)-sn-glycero-3-phosphocholine + N-(acetyl)-sphing-4-enine = 1-(9Z,12Z-octadecadienoyl)-N-acetylsphing-4-enine + 1-hexadecanoyl-sn-glycero-3-phosphocholine. It carries out the reaction 1-hexadecanoyl-2-(5Z,8Z,11Z,14Z-eicosatetraenoyl)-sn-glycero-3-phosphocholine + N-(acetyl)-sphing-4-enine = 1-(5Z,8Z,11Z,14Z)-eicosatetraenoyl-N-(acetyl)-sphing-4-enine + 1-hexadecanoyl-sn-glycero-3-phosphocholine. It catalyses the reaction 1-hexadecanoyl-2-(4Z,7Z,10Z,13Z,16Z,19Z-docosahexaenoyl)-sn-glycero-3-phosphocholine + N-(acetyl)-sphing-4-enine = 1-(4Z,7Z,10Z,13Z,16Z,19Z-docosahexaenoyl)-N-(acetyl)-sphing-4-enine + 1-hexadecanoyl-sn-glycero-3-phosphocholine. The catalysed reaction is 1-octadecanoyl-2-(9Z-octadecenoyl)-sn-glycero-3-phosphocholine + N-(acetyl)-sphing-4-enine = 1-(9Z-octadecenoyl)-N-(acetyl)-sphing-4-enine + 1-octadecanoyl-sn-glycero-3-phosphocholine. The enzyme catalyses 1-octadecanoyl-2-(9Z,12Z)-octadecadienoyl-sn-glycero-3-phosphocholine + N-(acetyl)-sphing-4-enine = 1-(9Z,12Z-octadecadienoyl)-N-acetylsphing-4-enine + 1-octadecanoyl-sn-glycero-3-phosphocholine. It carries out the reaction 1-(9Z-octadecenoyl)-2-hexadecanoyl-sn-glycero-3-phosphocholine + N-(acetyl)-sphing-4-enine = 1-hexadecanoyl-N-(acetyl)-sphing-4-enine + 1-(9Z-octadecenoyl)-sn-glycero-3-phosphocholine. It catalyses the reaction 1-(9Z)-octadecenoyl-2-octadecanoyl-sn-glycero-3-phosphocholine + N-(acetyl)-sphing-4-enine = 1-octadecanoyl-N-(acetyl)-sphing-4-enine + 1-(9Z-octadecenoyl)-sn-glycero-3-phosphocholine. The catalysed reaction is 1,2-di-(9Z-octadecenoyl)-sn-glycero-3-phosphocholine + N-(acetyl)-sphing-4-enine = 1-(9Z-octadecenoyl)-N-(acetyl)-sphing-4-enine + 1-(9Z-octadecenoyl)-sn-glycero-3-phosphocholine. The enzyme catalyses 1-octadecanoyl-2-(5Z,8Z,11Z,14Z-eicosatetraenoyl)-sn-glycero-3-phosphocholine + N-(acetyl)-sphing-4-enine = 1-(5Z,8Z,11Z,14Z)-eicosatetraenoyl-N-(acetyl)-sphing-4-enine + 1-octadecanoyl-sn-glycero-3-phosphocholine. It carries out the reaction a 1,2-diacyl-sn-glycero-3-phospho-L-serine + N-(acetyl)-sphing-4-enine = a 2-acyl-sn-glycero-3-phospho-L-serine + 1-O-acyl-N-(acetyl)-sphing-4-enine. It catalyses the reaction 1-octadecanoyl-2-(9Z-octadecenoyl)-sn-glycero-3-phospho-L-serine + N-(acetyl)-sphing-4-enine = 2-(9Z-octadecenoyl)-sn-glycero-3-phospho-L-serine + 1-octadecanoyl-N-(acetyl)-sphing-4-enine. The catalysed reaction is a 1,2-diacyl-sn-glycero-3-phospho-L-serine + N-(acetyl)-sphing-4-enine = 1-O-acyl-N-(acetyl)-sphing-4-enine + a 1-acyl-sn-glycero-3-phospho-L-serine. The enzyme catalyses 1-octadecanoyl-2-(9Z-octadecenoyl)-sn-glycero-3-phospho-L-serine + N-(acetyl)-sphing-4-enine = 1-octadecanoyl-sn-glycero-3-phosphoserine + 1-(9Z-octadecenoyl)-N-(acetyl)-sphing-4-enine. It carries out the reaction a 1,2-diacyl-sn-glycero-3-phospho-(1'-sn-glycerol) + N-(acetyl)-sphing-4-enine = 2-acyl-sn-glycero-3-phospho-(1'-sn-glycerol) + 1-O-acyl-N-(acetyl)-sphing-4-enine. It catalyses the reaction 1-octadecanoyl-2-(9Z-octadecenoyl)-sn-glycero-3-phospho-(1'-sn-glycerol) + N-(acetyl)-sphing-4-enine = 2-(9Z-octadecenoyl)-sn-glycero-3-phospho-(1'-sn-glycerol) + 1-octadecanoyl-N-(acetyl)-sphing-4-enine. The catalysed reaction is a 1,2-diacyl-sn-glycero-3-phospho-(1'-sn-glycerol) + N-(acetyl)-sphing-4-enine = 1-O-acyl-N-(acetyl)-sphing-4-enine + 1-acyl-sn-glycero-3-phospho-(1'-sn-glycerol). The enzyme catalyses 1-octadecanoyl-2-(9Z-octadecenoyl)-sn-glycero-3-phospho-(1'-sn-glycerol) + N-(acetyl)-sphing-4-enine = 1-octadecanoyl-sn-glycero-3-phospho-(1'-sn-glycerol) + 1-(9Z-octadecenoyl)-N-(acetyl)-sphing-4-enine. It carries out the reaction an N-acylethanolamine + a 1,2-diacyl-sn-glycero-3-phosphocholine = 2-(acylamino)ethyl fatty acid + a 2-acyl-sn-glycero-3-phosphocholine. It catalyses the reaction an N-acylethanolamine + a 1,2-diacyl-sn-glycero-3-phosphocholine = 2-(acylamino)ethyl fatty acid + a 1-acyl-sn-glycero-3-phosphocholine. The catalysed reaction is N-(5Z,8Z,11Z,14Z-eicosatetraenoyl)-ethanolamine + 1,2-di-(9Z-octadecenoyl)-sn-glycero-3-phosphocholine = 2-[(5Z,8Z,11Z,14Z)-eicosatetraenoylamino]ethyl (9Z)-octadecenoate + (9Z-octadecenoyl)-sn-glycero-3-phosphocholine. The enzyme catalyses N-(9Z-octadecenoyl) ethanolamine + 1,2-di-(9Z-octadecenoyl)-sn-glycero-3-phosphocholine = 2-[(9Z)-octadecenoylamino]ethyl (9Z)-octadecenoate + (9Z-octadecenoyl)-sn-glycero-3-phosphocholine. It carries out the reaction a 3-acyl-sn-glycerol + a 1,2-diacyl-sn-glycero-3-phosphocholine = a 1,3-diacylglycerol + a 1-acyl-sn-glycero-3-phosphocholine. It catalyses the reaction a 3-acyl-sn-glycerol + a 1,2-diacyl-sn-glycero-3-phosphocholine = a 1,3-diacylglycerol + a 2-acyl-sn-glycero-3-phosphocholine. The catalysed reaction is 3-(9Z-octadecenoyl)-sn-glycerol + 1,2-di-(9Z-octadecenoyl)-sn-glycero-3-phosphocholine = 1,3-di-(9Z-octadecenoyl)-glycerol + (9Z-octadecenoyl)-sn-glycero-3-phosphocholine. The enzyme catalyses 3-hexadecanoyl-sn-glycerol + 1,2-di-(9Z-octadecenoyl)-sn-glycero-3-phosphocholine = 1-(9Z)-octadecenoyl-3-hexadecanoyl-sn-glycerol + (9Z-octadecenoyl)-sn-glycero-3-phosphocholine. It carries out the reaction a 1-acyl-sn-glycerol + a 1,2-diacyl-sn-glycero-3-phosphocholine = a 1,3-diacylglycerol + a 2-acyl-sn-glycero-3-phosphocholine. It catalyses the reaction a 1-acyl-sn-glycerol + a 1,2-diacyl-sn-glycero-3-phosphocholine = a 1,3-diacylglycerol + a 1-acyl-sn-glycero-3-phosphocholine. The catalysed reaction is 1-(9Z-octadecenoyl)-sn-glycerol + 1,2-di-(9Z-octadecenoyl)-sn-glycero-3-phosphocholine = 1,3-di-(9Z-octadecenoyl)-glycerol + (9Z-octadecenoyl)-sn-glycero-3-phosphocholine. The enzyme catalyses 1-hexadecanoyl-sn-glycerol + 1,2-di-(9Z-octadecenoyl)-sn-glycero-3-phosphocholine = 1-hexadecanoyl-3-(9Z)-octadecenoyl-sn-glycerol + (9Z-octadecenoyl)-sn-glycero-3-phosphocholine. It carries out the reaction a 2-acylglycerol + a 1,2-diacyl-sn-glycero-3-phosphocholine = a 1,2-diacylglycerol + a 2-acyl-sn-glycero-3-phosphocholine. It catalyses the reaction a 2-acylglycerol + a 1,2-diacyl-sn-glycero-3-phosphocholine = a 1,2-diacylglycerol + a 1-acyl-sn-glycero-3-phosphocholine. The catalysed reaction is 2-hexadecanoylglycerol + 1,2-di-(9Z-octadecenoyl)-sn-glycero-3-phosphocholine = 1-(9Z)-octadecenoyl-2-hexadecanoylglycerol + (9Z-octadecenoyl)-sn-glycero-3-phosphocholine. The enzyme catalyses 1-O-alkylglycerol + a 1,2-diacyl-sn-glycero-3-phosphocholine = 1-O-alkyl-3-acylglycerol + a 1-acyl-sn-glycero-3-phosphocholine. It carries out the reaction 1-O-alkylglycerol + a 1,2-diacyl-sn-glycero-3-phosphocholine = 1-O-alkyl-3-acylglycerol + a 2-acyl-sn-glycero-3-phosphocholine. It catalyses the reaction 1-O-hexadecylglycerol + 1,2-di-(9Z-octadecenoyl)-sn-glycero-3-phosphocholine = 1-O-hexadecyl-3-(9Z)-octadecenoylglycerol + (9Z-octadecenoyl)-sn-glycero-3-phosphocholine. The catalysed reaction is 1-O-alkyl-2-acyl-sn-glycerol + a 1,2-diacyl-sn-glycero-3-phosphocholine = 1-O-alkyl-2,3-diacyl-sn-glycerol + a 2-acyl-sn-glycero-3-phosphocholine. The enzyme catalyses 1-O-alkyl-2-acyl-sn-glycerol + a 1,2-diacyl-sn-glycero-3-phosphocholine = 1-O-alkyl-2,3-diacyl-sn-glycerol + a 1-acyl-sn-glycero-3-phosphocholine. It carries out the reaction 1-O-hexadecyl-2-acetyl-sn-glycerol + 1,2-di-(9Z-octadecenoyl)-sn-glycero-3-phosphocholine = 1-O-hexadecyl-2-acetyl-3-(9Z)-octadecenoyl-sn-glycerol + (9Z-octadecenoyl)-sn-glycero-3-phosphocholine. It catalyses the reaction 1-O-hexadecyl-2-O-methyl-sn-glycerol + 1,2-di-(9Z-octadecenoyl)-sn-glycero-3-phosphocholine = 1-O-hexadecyl-2-O-methyl-3-(9Z)-octadecenoyl-sn-glycerol + (9Z-octadecenoyl)-sn-glycero-3-phosphocholine. The catalysed reaction is a 1,2-diacyl-sn-glycero-3-phosphoethanolamine + H2O = a 1-acyl-sn-glycero-3-phosphoethanolamine + a fatty acid + H(+). The enzyme catalyses 1-acyl-2-(5Z,8Z,11Z,14Z)-eicosatetraenoyl-sn-glycero-3-phosphoethanolamine + H2O = a 1-acyl-sn-glycero-3-phosphoethanolamine + (5Z,8Z,11Z,14Z)-eicosatetraenoate + H(+). It carries out the reaction a 1,2-diacyl-sn-glycero-3-phospho-(1'-sn-glycerol) + H2O = 1-acyl-sn-glycero-3-phospho-(1'-sn-glycerol) + a fatty acid + H(+). It catalyses the reaction 1-hexadecanoyl-2-(9Z-octadecenoyl)-sn-glycero-3-phospho-(1'-sn-glycerol) + H2O = 1-hexadecanoyl-sn-glycero-3-phospho-(1'-sn-glycerol) + (9Z)-octadecenoate + H(+). The catalysed reaction is a 1,2-diacyl-sn-glycero-3-phospho-(1'-sn-glycerol) + H2O = 2-acyl-sn-glycero-3-phospho-(1'-sn-glycerol) + a fatty acid + H(+). The enzyme catalyses 1-hexadecanoyl-2-(9Z-octadecenoyl)-sn-glycero-3-phospho-(1'-sn-glycerol) + H2O = 2-(9Z-octadecenoyl)-sn-glycero-3-phospho-(1'-sn-glycerol) + hexadecanoate + H(+). Has dual calcium-independent phospholipase and O-acyltransferase activities with a potential role in glycerophospholipid homeostasis and remodeling of acyl groups of lipophilic alcohols present in acidic cellular compartments. Catalyzes hydrolysis of the ester bond of the fatty acyl group attached at sn-1 or sn-2 position of phospholipids (phospholipase A1 or A2 activity) and transfer it to the hydroxyl group at the first carbon of lipophilic alcohols (O-acyltransferase activity). Among preferred fatty acyl donors are phosphatidylcholines, phosphatidylethanolamines, phosphatidylglycerols and phosphatidylserines. Favors sn-2 over sn-1 deacylation of unsaturated fatty acyl groups of phosphatidylcholines, phosphatidylethanolamines, and phosphatidylglycerols. Among preferred fatty acyl acceptors are natural lipophilic alcohols including short-chain ceramide N-acetyl-sphingosine (C2 ceramide), alkylacylglycerols, monoacylglycerols, and acylethanolamides such as anandamide and oleoylethanolamide. Selectively hydrolyzes the sn-1 fatty acyl group of truncated oxidized phospholipids and may play a role in detoxification of reactive oxidized phospholipids during oxidative stress. Required for normal phospholipid degradation in alveolar macrophages with potential implications in the clearance of pulmonary surfactant, which is mainly composed of dipalmitoylphosphatidylcholine (1,2-dihexadecanoyl-sn-glycero-3-phosphocholine). Involved in the first step of bis(monoacylglycero)phosphate (BMP) de novo synthesis from phosphatidylglycerol (1,2-diacyl-sn-glycero-3-phospho-(1'-sn-glycerol), PG). BMP is an important player in cargo sorting and degradation, regulation of cellular cholesterol levels and intercellular communication. At neutral pH, hydrolyzes the sn-1 fatty acyl group of the lysophosphatidylcholines. This Canis lupus familiaris (Dog) protein is Lysosomal phospholipase A and acyltransferase (PLA2G15).